Here is a 304-residue protein sequence, read N- to C-terminus: Oxidoreductase calM (304 aa).

I26, T45, D68, and N98 together coordinate NADP(+). S152 functions as the Proton donor in the catalytic mechanism. NADP(+) is bound by residues Y166, K170, V200, and T202. Y166 functions as the Proton acceptor in the catalytic mechanism. K170 acts as the Lowers pKa of active site Tyr in catalysis.

It belongs to the short-chain dehydrogenases/reductases (SDR) family.

It participates in secondary metabolite biosynthesis. Functionally, oxidoreductase; part of the gene cluster that mediates the biosynthesis of calbistrin A and related compounds. Calbistrin A is a secondary metabolite with an interesting structure that was recently found to have bioactivity against leukemia cells. It consists of two polyketides linked by an ester bond: a bicyclic decalin containing polyketide and a linear 12 carbon dioic acid structure. The polyketide synthase calA is probably responsible for forming the decalin moiety. Because calA lacks a designated enoylreductase (ER) domain, the required activity is provided by the trans-enoyl reductase calK. Following release from the PKS, calF then probably catalyzes the oxidation and the subsequent Diels Alder cycloisomerization that lead to the formation of the decalin moiety. The decalin polyketide backbone includes two C-methyl groups, at C7 and C11 in backbone, of which the C7 position is probably methylated by the methyltransferase domain of calA. A candidate for adding the methyl group at C11, if not done by CalA, is the cluster methyltransferase calH. Several additional tailoring enzymes within the cluster could be involved in the modification of the decalin polyketide product. Those include the 3 cytochrome P450 monooxygenases CalE, CalG and CalL, of which one might be responsible for the introduction of the extra hydroxyl group attached to the backbone of the decalin moiety, at position C9 in the backbone, that allows for attachment of the linear moiety. One tailoring enzyme activity that is expected to be involved in biosynthesis of calbistrin is an acyltransferase for connecting the two polyketide synthase products, and which could be performed by the cluster acyltransferase calJ. The enzyme responsible for the biosynthesis of the linear moiety, probably a second PKS, has not been identified yet. The protein is Oxidoreductase calM of Penicillium decumbens.